Consider the following 336-residue polypeptide: Protein FPV127 (336 aa).

The segment at 1–22 (MGGGLVLPTRDPPKEQDTSETA) is disordered.

It belongs to the poxviruses A16/G9/J5 family.

The chain is Protein FPV127 from Vertebrata (FPV).